The following is a 419-amino-acid chain: D(4) dopamine receptor (419 aa).

The Extracellular segment spans residues 1–29; it reads MGNRSTADADGLLAGRGPAAGASAGASAG. An N-linked (GlcNAc...) asparagine glycan is attached at Asn3. A helical transmembrane segment spans residues 30–50; that stretch reads LAGQGAAALVGGVLLIGAVLA. Topologically, residues 51 to 71 are cytoplasmic; the sequence is GNSLVCVSVATERALQTPTNS. Residues 72–92 traverse the membrane as a helical segment; it reads FIVSLAAADLLLALLVLPLFV. Residue Asp80 participates in Na(+) binding. At 93-110 the chain is on the extracellular side; sequence YSEVQGGAWLLSPRLCDA. Cysteines 108 and 185 form a disulfide. Residues 111–131 traverse the membrane as a helical segment; the sequence is LMAMDVMLCTASIFNLCAISV. (2R,3R)-nemonapride is bound at residue Asp115. Position 122 (Ser122) interacts with Na(+). Topologically, residues 132-152 are cytoplasmic; it reads DRFVAVAVPLRYNRQGGSRRQ. The helical transmembrane segment at 153–173 threads the bilayer; sequence LLLIGATWLLSAAVAAPVLCG. Residues 174-192 are Extracellular-facing; sequence LNDVRGRDPAVCRLEDRDY. Residues 193 to 213 form a helical membrane-spanning segment; the sequence is VVYSSVCSFFLPCPLMLLLYW. Ser196 contacts (2R,3R)-nemonapride. The Cytoplasmic segment spans residues 214-346; it reads ATFRGLQRWE…ITGRERKAMR (133 aa). The disordered stretch occupies residues 230 to 264; the sequence is LHGRAPRRPSGPGPPSPTPPAPRLPQDPCGPDCAP. The segment covering 238–254 has biased composition (pro residues); sequence PSGPGPPSPTPPAPRLP. Residues 249–264 form a 1; approximate repeat; sequence PAPRLPQDPCGPDCAP. Positions 249–312 are 4 X 16 AA approximate tandem repeats of [PA]-A-P-G-L-P-[PQR]-[DG]-P-C-G-P-D-C-A-P; it reads PAPRLPQDPC…PDPCGSNCAP (64 aa). 2 consecutive repeat copies span residues 265–280 and 281–296. The 4; approximate repeat unit spans residues 297–312; sequence PAPGLPPDPCGSNCAP. The segment at 317 to 336 is disordered; that stretch reads RAAALPPQTPPQTRRRRRAK. The helical transmembrane segment at 347–367 threads the bilayer; the sequence is VLPVVVGAFLLCWTPFFVVHI. The Extracellular portion of the chain corresponds to 368–382; that stretch reads TQALCPACSVPPRLV. Cys372 and Cys375 are oxidised to a cystine. A helical transmembrane segment spans residues 383-403; sequence SAVTWLGYVNSALNPVIYTVF. Residues 404–419 lie on the Cytoplasmic side of the membrane; the sequence is NAEFRNVFRKALRACC. Residue Cys419 is the site of S-palmitoyl cysteine attachment.

Belongs to the G-protein coupled receptor 1 family. As to quaternary structure, forms homo- and heterooligomers with DRD2. D4.7 allele exhibits higher affinity for homodimers compared to DRD2 heterodimers, while alleles D42. and 4.4 have similar affinities for both. The interaction with DRD2 may modulate agonist-induced downstream signaling. Interacts with CLIC6. Interacts with GPRASP1. May interact with ADORA2A. Interacts with KLHL12. Post-translationally, polyubiquitinated by the BCR(KLHL12) E3 ubiquitin ligase complex: polyubiquitination does not lead to degradation of DRD4 protein. In terms of processing, palmitoylated. Palmitoylation of the C-terminal Cys is important for normal expression at the cell membrane. Highly expressed in retina. Detected at much lower levels in brain, in amygdala, thalamus, hypothalamus, cerebellum and pituitary.

The protein resides in the cell membrane. Its activity is regulated as follows. Signaling in response to agonists such as dopamine, epinephrine and norepinephrine is modulated by Na(+); lower Na(+) levels result in higher receptor activity (in vitro). In terms of biological role, dopamine receptor responsible for neuronal signaling in the mesolimbic system of the brain, an area of the brain that regulates emotion and complex behavior. Activated by dopamine, but also by epinephrine and norepinephrine, and by numerous synthetic agonists and drugs. Agonist binding triggers signaling via G proteins that inhibit adenylyl cyclase. Modulates the circadian rhythm of contrast sensitivity by regulating the rhythmic expression of NPAS2 in the retinal ganglion cells. The sequence is that of D(4) dopamine receptor (DRD4) from Homo sapiens (Human).